The chain runs to 650 residues: 1-deoxy-D-xylulose-5-phosphate synthase (650 aa).

Residues H73 and 114-116 (SHA) contribute to the thiamine diphosphate site. Position 145 (D145) interacts with Mg(2+). Thiamine diphosphate contacts are provided by residues 146–147 (GA), N174, Y285, and E367. Residue N174 participates in Mg(2+) binding. The disordered stretch occupies residues 631 to 650 (MGDEVGADESNQTPAGGGQA).

This sequence belongs to the transketolase family. DXPS subfamily. Homodimer. Mg(2+) is required as a cofactor. Requires thiamine diphosphate as cofactor.

The enzyme catalyses D-glyceraldehyde 3-phosphate + pyruvate + H(+) = 1-deoxy-D-xylulose 5-phosphate + CO2. It functions in the pathway metabolic intermediate biosynthesis; 1-deoxy-D-xylulose 5-phosphate biosynthesis; 1-deoxy-D-xylulose 5-phosphate from D-glyceraldehyde 3-phosphate and pyruvate: step 1/1. Functionally, catalyzes the acyloin condensation reaction between C atoms 2 and 3 of pyruvate and glyceraldehyde 3-phosphate to yield 1-deoxy-D-xylulose-5-phosphate (DXP). This chain is 1-deoxy-D-xylulose-5-phosphate synthase, found in Parafrankia sp. (strain EAN1pec).